A 145-amino-acid chain; its full sequence is MKTCTVICCTALVLGLTAYAQKECVAVSSQLAQIIGHLPNKSPLSAFTRRDLIRAFKMAQESGHHLAGEKPRTFTEKMNHQMVLTYLKRYNYLAGGHITPETVKRAVLKLQHNSGVLEQTGVIDVPTINFVKTHPRGHVEPLPSQ.

Residues 1–20 (MKTCTVICCTALVLGLTAYA) form the signal peptide.

This is an uncharacterized protein from Aedes vexans (Inland floodwater mosquito).